Consider the following 276-residue polypeptide: Nickel import system permease protein NikC (276 aa).

The next 5 membrane-spanning stretches (helical) occupy residues 10-30 (LIFF…FFVS), 73-93 (LFVT…LGLF), 108-128 (FIDV…ASFF), 186-206 (IIPA…LYIS), and 238-258 (IMLI…NLTG). Residues 69-258 (ARSTLFVTVL…ITILIFNLTG (190 aa)) form the ABC transmembrane type-1 domain.

It belongs to the binding-protein-dependent transport system permease family. OppBC subfamily. In terms of assembly, the complex is composed of two ATP-binding proteins (NikD and NikE), two transmembrane proteins (NikB and NikC) and a solute-binding protein (NikA).

The protein resides in the cell membrane. Part of the ABC transporter complex NikABCDE (Opp2) involved in nickel import. Probably responsible for the translocation of the substrate across the membrane. This is Nickel import system permease protein NikC from Staphylococcus aureus (strain USA300).